The following is a 373-amino-acid chain: MSDNSKTRVVVGMSGGVDSSVTALLLKEQGYDVIGIFMKNWDDTDENGVCTATEDYKDVVAVADQIGIPYYSVNFEKEYWDRVFEYFLAEYRAGRTPNPDVMCNKEIKFKAFLDYAITLGADYVATGHYARVARDEDGTVHMLRGVDNGKDQTYFLSQLSQEQLQKTMFPLGHLEKPEVRKLAEEAGLSTAKKKDSTGICFIGEKNFKNFLSNYLPAQPGRMMTVDGRDMGEHAGLMYYTIGQRGGLGIGGQHGGDNAPWFVVGKDLSKNILYVGQGFYHDSLMSTSLEASQVHFTREMPEEFTLECTAKFRYRQPDSKVTVHVKGDKAEVIFAEPQRAITPGQAVVFYDGEECLGGGLIDNAYRDGQVCQYI.

Residues 12 to 19 and Met38 contribute to the ATP site; that span reads GMSGGVDS. Positions 98–100 are interaction with target base in tRNA; that stretch reads NPD. The active-site Nucleophile is the Cys103. Cys103 and Cys200 are oxidised to a cystine. Residue Gly127 coordinates ATP. The interval 150–152 is interaction with tRNA; the sequence is KDQ. The active-site Cysteine persulfide intermediate is Cys200. An interaction with tRNA region spans residues 312–313; it reads RY.

It belongs to the MnmA/TRMU family.

It localises to the cytoplasm. The enzyme catalyses S-sulfanyl-L-cysteinyl-[protein] + uridine(34) in tRNA + AH2 + ATP = 2-thiouridine(34) in tRNA + L-cysteinyl-[protein] + A + AMP + diphosphate + H(+). Its function is as follows. Catalyzes the 2-thiolation of uridine at the wobble position (U34) of tRNA, leading to the formation of s(2)U34. In Streptococcus pneumoniae (strain ATCC 700669 / Spain 23F-1), this protein is tRNA-specific 2-thiouridylase MnmA.